The sequence spans 236 residues: 2,3,4,5-tetrahydropyridine-2,6-dicarboxylate N-acetyltransferase (236 aa).

The protein belongs to the transferase hexapeptide repeat family. DapH subfamily.

It catalyses the reaction (S)-2,3,4,5-tetrahydrodipicolinate + acetyl-CoA + H2O = L-2-acetamido-6-oxoheptanedioate + CoA. It participates in amino-acid biosynthesis; L-lysine biosynthesis via DAP pathway; LL-2,6-diaminopimelate from (S)-tetrahydrodipicolinate (acetylase route): step 1/3. In terms of biological role, catalyzes the transfer of an acetyl group from acetyl-CoA to tetrahydrodipicolinate. The protein is 2,3,4,5-tetrahydropyridine-2,6-dicarboxylate N-acetyltransferase of Geobacillus kaustophilus (strain HTA426).